A 504-amino-acid chain; its full sequence is MGKFTSFLKRAGSATKNALTSDAAKRMYKMAGKTLQKVVESEVGSSAIDGVMQGTIQSIIQGENLGDSIRQAVILNVAGTLESAPDPLSPGEQLLYNKVSEIERAEKEDRVIETHNKKIIEKYGEDLLEIRKIMKGEAEAEQLEGKEMEYVEKALKGMLKIGKDQSERITRLYRALQTEEDLRTSDETRMISEYREKFDALKQAIELEQQATHEEAMQEMLDLSAEVIETAAEEVPIFGAGQANVVATTRAIQGGLKLKEIIDKLTGIDLSHLKVADIHPHIIEKAMLKDRIPDNELAMAIKSKVEVIDEMNTETEHVIESIIPLVKKEYEKHDNKYHVNIPSALKIHSEHTPKVHIYTTPWDSDKVFICRCIAPHHQQRSFMIGFDLEVEFVFYEDTSVEGHIMHGGAVSIEGRGFRQAYSEFMNSLVYPSTPELHKRRLQRSLGSHPIYMGSMVITVSYEQLVSNAMKLVYDTDLQMHCLRGPLKFQRRTLMNALLFGVKVA.

Positions 1 to 42 (MGKFTSFLKRAGSATKNALTSDAAKRMYKMAGKTLQKVVESE) are involved in membrane permeabilization.

It belongs to the orbivirus VP5 family.

The protein resides in the virion. Functionally, VP5 protein is one of the two proteins (with VP2) which constitute the virus particle outer capsid. Acts as a membrane permeabilization protein that mediates release of viral particles from endosomal compartments into the cytoplasm. Permeabilization activity is probably negatively regulated by VP2 and is triggered by endosomal degradation of VP2 and exposure to low pH. This is Outer capsid protein VP5 (Segment-6) from African horse sickness virus 6 (AHSV-6).